The sequence spans 177 residues: Peptide methionine sulfoxide reductase MsrA (177 aa).

The active site involves cysteine 11.

It belongs to the MsrA Met sulfoxide reductase family.

It carries out the reaction L-methionyl-[protein] + [thioredoxin]-disulfide + H2O = L-methionyl-(S)-S-oxide-[protein] + [thioredoxin]-dithiol. The enzyme catalyses [thioredoxin]-disulfide + L-methionine + H2O = L-methionine (S)-S-oxide + [thioredoxin]-dithiol. In terms of biological role, has an important function as a repair enzyme for proteins that have been inactivated by oxidation. Catalyzes the reversible oxidation-reduction of methionine sulfoxide in proteins to methionine. This chain is Peptide methionine sulfoxide reductase MsrA, found in Trichodesmium erythraeum (strain IMS101).